A 633-amino-acid polypeptide reads, in one-letter code: DNA-directed RNA polymerase subunit beta' (633 aa).

Positions 72, 74, 87, and 90 each coordinate Zn(2+). Aspartate 468, aspartate 470, and aspartate 472 together coordinate Mg(2+).

It belongs to the RNA polymerase beta' chain family. RpoC1 subfamily. As to quaternary structure, in plastids the minimal PEP RNA polymerase catalytic core is composed of four subunits: alpha, beta, beta', and beta''. When a (nuclear-encoded) sigma factor is associated with the core the holoenzyme is formed, which can initiate transcription. The cofactor is Mg(2+). Requires Zn(2+) as cofactor.

Its subcellular location is the plastid. It is found in the chloroplast. It carries out the reaction RNA(n) + a ribonucleoside 5'-triphosphate = RNA(n+1) + diphosphate. DNA-dependent RNA polymerase catalyzes the transcription of DNA into RNA using the four ribonucleoside triphosphates as substrates. The sequence is that of DNA-directed RNA polymerase subunit beta' from Cyanidium caldarium (Red alga).